A 550-amino-acid polypeptide reads, in one-letter code: Mitochondrial distribution and morphology protein 12 (550 aa).

Residues 1–550 form the SMP-LTD domain; that stretch reads MSIDLNWETV…VYPSYWTFLV (550 aa). Disordered regions lie at residues 76 to 97, 196 to 386, and 466 to 489; these read SDLASESGSEEDEEEIADDRRR, GHGH…KLRE, and ENEVDGGEGDKQTGFKSPPGGGNG. Residues 83-92 show a composition bias toward acidic residues; the sequence is GSEEDEEEIA. Residues 270–286 are compositionally biased toward pro residues; sequence PPFPPSSTGGPSPPPGL. The span at 288-305 shows a compositional bias: basic residues; that stretch reads KPHHPHHPHHHHAHHAHP. Residues 327–344 show a composition bias toward basic and acidic residues; that stretch reads PTRDKTTPSHHPDPEDVH. Residues 346-355 show a composition bias toward polar residues; it reads PNTTTTNKQR. A compositionally biased stretch (low complexity) spans 356-371; sequence STSPATSSPLATSAQE.

Belongs to the MDM12 family. As to quaternary structure, component of the ER-mitochondria encounter structure (ERMES) or MDM complex, composed of MMM1, MDM10, MDM12 and MDM34. An MMM1 homodimer associates with one molecule of MDM12 on each side in a pairwise head-to-tail manner, and the SMP-LTD domains of MMM1 and MDM12 generate a continuous hydrophobic tunnel for phospholipid trafficking.

The protein localises to the mitochondrion outer membrane. Its subcellular location is the endoplasmic reticulum membrane. In terms of biological role, component of the ERMES/MDM complex, which serves as a molecular tether to connect the endoplasmic reticulum (ER) and mitochondria. Components of this complex are involved in the control of mitochondrial shape and protein biogenesis, and function in nonvesicular lipid trafficking between the ER and mitochondria. MDM12 is required for the interaction of the ER-resident membrane protein MMM1 and the outer mitochondrial membrane-resident beta-barrel protein MDM10. The MDM12-MMM1 subcomplex functions in the major beta-barrel assembly pathway that is responsible for biogenesis of all mitochondrial outer membrane beta-barrel proteins, and acts in a late step after the SAM complex. The MDM10-MDM12-MMM1 subcomplex further acts in the TOM40-specific pathway after the action of the MDM12-MMM1 complex. Essential for establishing and maintaining the structure of mitochondria and maintenance of mtDNA nucleoids. This is Mitochondrial distribution and morphology protein 12 from Podospora anserina (strain S / ATCC MYA-4624 / DSM 980 / FGSC 10383) (Pleurage anserina).